A 38-amino-acid polypeptide reads, in one-letter code: Photosystem II reaction center protein L (38 aa).

Residues 17–37 (SLYWGLLLIFVLAVLFSSYFF) form a helical membrane-spanning segment.

The protein belongs to the PsbL family. In terms of assembly, PSII is composed of 1 copy each of membrane proteins PsbA, PsbB, PsbC, PsbD, PsbE, PsbF, PsbH, PsbI, PsbJ, PsbK, PsbL, PsbM, PsbT, PsbX, PsbY, PsbZ, Psb30/Ycf12, at least 3 peripheral proteins of the oxygen-evolving complex and a large number of cofactors. It forms dimeric complexes.

The protein localises to the plastid. It is found in the chloroplast thylakoid membrane. Functionally, one of the components of the core complex of photosystem II (PSII). PSII is a light-driven water:plastoquinone oxidoreductase that uses light energy to abstract electrons from H(2)O, generating O(2) and a proton gradient subsequently used for ATP formation. It consists of a core antenna complex that captures photons, and an electron transfer chain that converts photonic excitation into a charge separation. This subunit is found at the monomer-monomer interface and is required for correct PSII assembly and/or dimerization. The sequence is that of Photosystem II reaction center protein L from Thalassiosira pseudonana (Marine diatom).